A 572-amino-acid chain; its full sequence is Dihydroxy-acid dehydratase (572 aa).

A Mg(2+)-binding site is contributed by aspartate 78. Cysteine 119 serves as a coordination point for [2Fe-2S] cluster. Residues aspartate 120 and lysine 121 each coordinate Mg(2+). At lysine 121 the chain carries N6-carboxylysine. Residue cysteine 192 participates in [2Fe-2S] cluster binding. Position 459 (glutamate 459) interacts with Mg(2+). Serine 485 acts as the Proton acceptor in catalysis.

Belongs to the IlvD/Edd family. Homodimer. It depends on [2Fe-2S] cluster as a cofactor. Requires Mg(2+) as cofactor.

The enzyme catalyses (2R)-2,3-dihydroxy-3-methylbutanoate = 3-methyl-2-oxobutanoate + H2O. It carries out the reaction (2R,3R)-2,3-dihydroxy-3-methylpentanoate = (S)-3-methyl-2-oxopentanoate + H2O. It participates in amino-acid biosynthesis; L-isoleucine biosynthesis; L-isoleucine from 2-oxobutanoate: step 3/4. The protein operates within amino-acid biosynthesis; L-valine biosynthesis; L-valine from pyruvate: step 3/4. Functionally, functions in the biosynthesis of branched-chain amino acids. Catalyzes the dehydration of (2R,3R)-2,3-dihydroxy-3-methylpentanoate (2,3-dihydroxy-3-methylvalerate) into 2-oxo-3-methylpentanoate (2-oxo-3-methylvalerate) and of (2R)-2,3-dihydroxy-3-methylbutanoate (2,3-dihydroxyisovalerate) into 2-oxo-3-methylbutanoate (2-oxoisovalerate), the penultimate precursor to L-isoleucine and L-valine, respectively. This Helicobacter hepaticus (strain ATCC 51449 / 3B1) protein is Dihydroxy-acid dehydratase.